Reading from the N-terminus, the 64-residue chain is Arasin 1 (64 aa).

The first 25 residues, 1 to 25, serve as a signal peptide directing secretion; that stretch reads MERRTLLVVLLVCSCVVAAAAEASP. Residues 22–43 form a disordered region; sequence EASPSRWPSPGRPRPFPGRPKP. Residues 26–48 are pro/Arg-rich region responsible for antibacterial and antifungal activity; sequence SRWPSPGRPRPFPGRPKPIFRPR. The span at 31–43 shows a compositional bias: pro residues; the sequence is PGRPRPFPGRPKP. The segment at 49–62 is cystein-containing C-terminal region important for stability but not essential for antimicrobial activity; the sequence is PCNCYAPPCPCDRW. 2 disulfide bridges follow: Cys50-Cys59 and Cys52-Cys57. A propeptide spanning residues 63 to 64 is cleaved from the precursor; it reads RH.

Interacts with chitin through the N-terminal region (26-48). This interaction may be important, since chitin is a component of the fungal cell wall, as well as of the crab exoskeleton (permitting a possible action of arasin in wound healing in case of lesions). In terms of processing, disulfide bonds are important for activity especially against Gram-negative bacteria, since the linearization of the peptide causes a strong decrease of activity on these bacteria. Mainly expressed in hemocytes. No or very low expression in heart, gills, inestines, and epidermis.

In terms of biological role, antimicrobial peptide that has a large activity spectrum with activity against Gram-positive, Gram-negative bacteria, as well as against fungi. Shows activity at micromolar concentrations. Displays minimal inhibitory concentration (MIC) values lower than minimal bactericidal concentrations (MBC). Synthetic peptides with similar activities than the full length peptide (composed of the first 23 or 25 amino acids (Arasin 1(26-48) or Arasin 1(26-50))) may have a dual mode of action depending on the peptide concentrations. At MIC concentrations, the peptide penetrates into the cytoplasm of target cells (tested on the Gram-negative E.coli). The two inner membrane proteins YgdD and SbmA may be required for this uptake. At concentrations higher than MIC, arasin may act by disrupting membranes. Full-length and N-terminal peptides do not show hemolytic activity. This is Arasin 1 from Hyas araneus (Atlantic lyre crab).